The primary structure comprises 346 residues: tRNA N6-adenosine threonylcarbamoyltransferase (346 aa).

Fe cation is bound by residues His111 and His115. Residues 134–138 (LVSGG), Asp167, Gly180, and Asn279 each bind substrate. Asp307 is a Fe cation binding site.

It belongs to the KAE1 / TsaD family. Fe(2+) is required as a cofactor.

The protein resides in the cytoplasm. It carries out the reaction L-threonylcarbamoyladenylate + adenosine(37) in tRNA = N(6)-L-threonylcarbamoyladenosine(37) in tRNA + AMP + H(+). In terms of biological role, required for the formation of a threonylcarbamoyl group on adenosine at position 37 (t(6)A37) in tRNAs that read codons beginning with adenine. Is involved in the transfer of the threonylcarbamoyl moiety of threonylcarbamoyl-AMP (TC-AMP) to the N6 group of A37, together with TsaE and TsaB. TsaD likely plays a direct catalytic role in this reaction. The chain is tRNA N6-adenosine threonylcarbamoyltransferase from Burkholderia ambifaria (strain MC40-6).